The sequence spans 143 residues: Snake venom vascular endothelial growth factor toxin (143 aa).

Positions 1–24 are cleaved as a signal peptide; sequence MAAYLLAVAILFCIQGWPSATVQG. Q25 carries the post-translational modification Pyrrolidone carboxylic acid. Disulfide bonds link C38/C80, C69/C115, and C73/C117. Positions 115 to 143 are disordered; sequence CECRPRSPGDVNNGRNPEEGEPRARFPFV. Over residues 130–143 the composition is skewed to basic and acidic residues; it reads NPEEGEPRARFPFV.

The protein belongs to the PDGF/VEGF growth factor family. Snake venom VEGF subfamily. As to quaternary structure, homodimer; disulfide-linked. Interacts with VEGF receptor-2 (KDR). In terms of processing, the N-terminus is blocked for N-terminal sequencing, suggesting a Pyrrolidone carboxylic acid at Gln-25. As to expression, expressed by the venom gland.

The protein resides in the secreted. Functionally, snake venom VEGFs that may contribute to venom dispersion and prey subjugation by inducing vascular permeability and hypotension. This protein induces an increase in capillary permeability when intradermally injected into mice. Also provokes a drastic hypotensive effect after intravenous injection. The hypotension is mediated by nitric oxide (NO), which is produced by VEGF-activated endothelium NO synthase. Also induces angiogenesis in vitro. Unlike other crotalid VEGFs, this protein interacts with VEGF receptor-2 (KDR) with a high affinity (Kd=413 pM), whereas no interaction is detected with VEGF receptor-1 (FLT1). In Protobothrops jerdonii (Jerdon's pitviper), this protein is Snake venom vascular endothelial growth factor toxin.